Reading from the N-terminus, the 37-residue chain is Potassium channel toxin alpha-KTx 1.11 (37 aa).

Disulfide bonds link C7/C28, C13/C33, and C17/C35.

Belongs to the short scorpion toxin superfamily. Potassium channel inhibitor family. Alpha-KTx 01 subfamily. As to expression, expressed by the venom gland.

The protein resides in the secreted. Functionally, reversibly blocks the high conductance calcium-activated potassium channels composed of only alpha subunits (KCa1.1/KCNMA1). Unreversibly blocks the high conductance calcium-activated potassium channels composed of alpha and beta1 subunits (KCNMA1 and KCNMB1). Unreversibly and weakly blocks the high conductance calcium-activated potassium channels composed of alpha and beta4 (KCNMA1 and KCNMB4). The protein is Potassium channel toxin alpha-KTx 1.11 of Centruroides noxius (Mexican scorpion).